We begin with the raw amino-acid sequence, 254 residues long: Proteasome subunit alpha (254 aa).

The interval 232-254 (PEVDSSESSNEAEAGAEKGSGES) is disordered.

The protein belongs to the peptidase T1A family. The 20S proteasome core is composed of 14 alpha and 14 beta subunits that assemble into four stacked heptameric rings, resulting in a barrel-shaped structure. The two inner rings, each composed of seven catalytic beta subunits, are sandwiched by two outer rings, each composed of seven alpha subunits. The catalytic chamber with the active sites is on the inside of the barrel. Has a gated structure, the ends of the cylinder being occluded by the N-termini of the alpha-subunits. Is capped by the proteasome-associated ATPase, ARC.

The protein resides in the cytoplasm. It participates in protein degradation; proteasomal Pup-dependent pathway. Its activity is regulated as follows. The formation of the proteasomal ATPase ARC-20S proteasome complex, likely via the docking of the C-termini of ARC into the intersubunit pockets in the alpha-rings, may trigger opening of the gate for substrate entry. Interconversion between the open-gate and close-gate conformations leads to a dynamic regulation of the 20S proteasome proteolysis activity. Component of the proteasome core, a large protease complex with broad specificity involved in protein degradation. The protein is Proteasome subunit alpha of Mycolicibacterium vanbaalenii (strain DSM 7251 / JCM 13017 / BCRC 16820 / KCTC 9966 / NRRL B-24157 / PYR-1) (Mycobacterium vanbaalenii).